Consider the following 474-residue polypeptide: tRNA-2-methylthio-N(6)-dimethylallyladenosine synthase (474 aa).

One can recognise an MTTase N-terminal domain in the interval lysine 3 to glycine 120. 6 residues coordinate [4Fe-4S] cluster: cysteine 12, cysteine 49, cysteine 83, cysteine 157, cysteine 161, and cysteine 164. The 233-residue stretch at arginine 143–alanine 375 folds into the Radical SAM core domain. The TRAM domain maps to arginine 378–arginine 441.

Belongs to the methylthiotransferase family. MiaB subfamily. In terms of assembly, monomer. [4Fe-4S] cluster is required as a cofactor.

The protein resides in the cytoplasm. It carries out the reaction N(6)-dimethylallyladenosine(37) in tRNA + (sulfur carrier)-SH + AH2 + 2 S-adenosyl-L-methionine = 2-methylsulfanyl-N(6)-dimethylallyladenosine(37) in tRNA + (sulfur carrier)-H + 5'-deoxyadenosine + L-methionine + A + S-adenosyl-L-homocysteine + 2 H(+). In terms of biological role, catalyzes the methylthiolation of N6-(dimethylallyl)adenosine (i(6)A), leading to the formation of 2-methylthio-N6-(dimethylallyl)adenosine (ms(2)i(6)A) at position 37 in tRNAs that read codons beginning with uridine. The chain is tRNA-2-methylthio-N(6)-dimethylallyladenosine synthase from Salmonella paratyphi A (strain ATCC 9150 / SARB42).